Here is a 501-residue protein sequence, read N- to C-terminus: Cytochrome P450 2J5 (501 aa).

Residue Cys447 participates in heme binding.

This sequence belongs to the cytochrome P450 family. Heme serves as cofactor.

The protein localises to the endoplasmic reticulum membrane. It is found in the microsome membrane. It carries out the reaction an organic molecule + reduced [NADPH--hemoprotein reductase] + O2 = an alcohol + oxidized [NADPH--hemoprotein reductase] + H2O + H(+). In Mus musculus (Mouse), this protein is Cytochrome P450 2J5 (Cyp2j5).